The sequence spans 369 residues: Flagellar P-ring protein (369 aa).

The signal sequence occupies residues 1–22 (MIKLKQLIAATLLLSAAFGAHA).

It belongs to the FlgI family. As to quaternary structure, the basal body constitutes a major portion of the flagellar organelle and consists of four rings (L,P,S, and M) mounted on a central rod.

It localises to the periplasm. The protein resides in the bacterial flagellum basal body. Its function is as follows. Assembles around the rod to form the L-ring and probably protects the motor/basal body from shearing forces during rotation. The protein is Flagellar P-ring protein of Pseudomonas syringae pv. tomato (strain ATCC BAA-871 / DC3000).